We begin with the raw amino-acid sequence, 291 residues long: Formamidopyrimidine-DNA glycosylase (291 aa).

P2 functions as the Schiff-base intermediate with DNA in the catalytic mechanism. E3 functions as the Proton donor in the catalytic mechanism. Catalysis depends on K58, which acts as the Proton donor; for beta-elimination activity. DNA-binding residues include H104, R123, and K166. Residues 257-291 form an FPG-type zinc finger; it reads KVYDREGEPCPTCGGTVQRFVQNGRSTFWCPKCQK. Catalysis depends on R281, which acts as the Proton donor; for delta-elimination activity.

It belongs to the FPG family. Monomer. It depends on Zn(2+) as a cofactor.

The enzyme catalyses Hydrolysis of DNA containing ring-opened 7-methylguanine residues, releasing 2,6-diamino-4-hydroxy-5-(N-methyl)formamidopyrimidine.. It catalyses the reaction 2'-deoxyribonucleotide-(2'-deoxyribose 5'-phosphate)-2'-deoxyribonucleotide-DNA = a 3'-end 2'-deoxyribonucleotide-(2,3-dehydro-2,3-deoxyribose 5'-phosphate)-DNA + a 5'-end 5'-phospho-2'-deoxyribonucleoside-DNA + H(+). Its function is as follows. Involved in base excision repair of DNA damaged by oxidation or by mutagenic agents. Acts as a DNA glycosylase that recognizes and removes damaged bases. Has a preference for oxidized purines, such as 7,8-dihydro-8-oxoguanine (8-oxoG). Has AP (apurinic/apyrimidinic) lyase activity and introduces nicks in the DNA strand. Cleaves the DNA backbone by beta-delta elimination to generate a single-strand break at the site of the removed base with both 3'- and 5'-phosphates. The polypeptide is Formamidopyrimidine-DNA glycosylase (Rhodopseudomonas palustris (strain ATCC BAA-98 / CGA009)).